The primary structure comprises 1155 residues: DNA-directed RNA polymerase subunit beta (1155 aa).

The protein belongs to the RNA polymerase beta chain family. As to quaternary structure, the RNAP catalytic core consists of 2 alpha, 1 beta, 1 beta' and 1 omega subunit. When a sigma factor is associated with the core the holoenzyme is formed, which can initiate transcription.

The catalysed reaction is RNA(n) + a ribonucleoside 5'-triphosphate = RNA(n+1) + diphosphate. Functionally, DNA-dependent RNA polymerase catalyzes the transcription of DNA into RNA using the four ribonucleoside triphosphates as substrates. This Borrelia recurrentis (strain A1) protein is DNA-directed RNA polymerase subunit beta.